A 432-amino-acid polypeptide reads, in one-letter code: Ribosomal protein uS12 methylthiotransferase RimO (432 aa).

The MTTase N-terminal domain occupies 1–112 (MKIGVVSLGC…ILNYLGLKEK (112 aa)). The [4Fe-4S] cluster site is built by C10, C46, C75, C134, C138, and C141. One can recognise a Radical SAM core domain in the interval 120–350 (STPRSYAYLK…MAIQRGITRK (231 aa)). Residues 353-422 (EEFLGKEIEV…DYDLAGRDTE (70 aa)) enclose the TRAM domain.

It belongs to the methylthiotransferase family. RimO subfamily. The cofactor is [4Fe-4S] cluster.

The protein resides in the cytoplasm. The catalysed reaction is L-aspartate(89)-[ribosomal protein uS12]-hydrogen + (sulfur carrier)-SH + AH2 + 2 S-adenosyl-L-methionine = 3-methylsulfanyl-L-aspartate(89)-[ribosomal protein uS12]-hydrogen + (sulfur carrier)-H + 5'-deoxyadenosine + L-methionine + A + S-adenosyl-L-homocysteine + 2 H(+). Functionally, catalyzes the methylthiolation of an aspartic acid residue of ribosomal protein uS12. In Aquifex aeolicus (strain VF5), this protein is Ribosomal protein uS12 methylthiotransferase RimO.